The sequence spans 496 residues: Probable CtpA-like serine protease (496 aa).

A compositionally biased stretch (basic and acidic residues) spans 1–16 (MDDKQHTSSSDDERAE). Residues 1-27 (MDDKQHTSSSDDERAEIATSNQDQQTN) are disordered. Over residues 18–27 (ATSNQDQQTN) the composition is skewed to polar residues. Residues 39-59 (FISILIGTILITAVITVVAYI) form a helical membrane-spanning segment. Positions 124 to 206 (TKSFNEGVSG…TEVTLTVQRG (83 aa)) constitute a PDZ domain. Catalysis depends on charge relay system residues Ser-329, Asp-340, and Lys-354.

The protein belongs to the peptidase S41A family.

Its subcellular location is the cell membrane. The polypeptide is Probable CtpA-like serine protease (Staphylococcus aureus (strain bovine RF122 / ET3-1)).